Consider the following 260-residue polypeptide: Alpha-acetolactate decarboxylase (260 aa).

This sequence belongs to the alpha-acetolactate decarboxylase family.

The enzyme catalyses (2S)-2-acetolactate + H(+) = (R)-acetoin + CO2. It functions in the pathway polyol metabolism; (R,R)-butane-2,3-diol biosynthesis; (R,R)-butane-2,3-diol from pyruvate: step 2/3. Functionally, converts acetolactate into acetoin. This is Alpha-acetolactate decarboxylase (budA) from Methylococcus capsulatus (strain ATCC 33009 / NCIMB 11132 / Bath).